A 128-amino-acid chain; its full sequence is Ribonuclease pancreatic (128 aa).

The span at Lys-1–Met-13 shows a compositional bias: basic and acidic residues. The disordered stretch occupies residues Lys-1–Cys-26. Substrate is bound by residues Lys-7 and Arg-10. His-12 (proton acceptor) is an active-site residue. A compositionally biased stretch (polar residues) spans Asp-14–Cys-26. 4 disulfide bridges follow: Cys-26–Cys-84, Cys-40–Cys-95, Cys-58–Cys-110, and Cys-65–Cys-72. A glycan (N-linked (GlcNAc...) asparagine) is linked at Asn-34. A substrate-binding site is contributed by Lys-41–Thr-45. A glycan (N-linked (GlcNAc...) asparagine) is linked at Asn-62. The substrate site is built by Lys-66 and Arg-85. His-119 (proton donor) is an active-site residue.

It belongs to the pancreatic ribonuclease family. In terms of assembly, monomer. Interacts with and forms tight 1:1 complexes with RNH1. Dimerization of two such complexes may occur. Interaction with RNH1 inhibits this protein. As to expression, pancreas.

Its subcellular location is the secreted. It catalyses the reaction an [RNA] containing cytidine + H2O = an [RNA]-3'-cytidine-3'-phosphate + a 5'-hydroxy-ribonucleotide-3'-[RNA].. The catalysed reaction is an [RNA] containing uridine + H2O = an [RNA]-3'-uridine-3'-phosphate + a 5'-hydroxy-ribonucleotide-3'-[RNA].. Endonuclease that catalyzes the cleavage of RNA on the 3' side of pyrimidine nucleotides. Acts on single-stranded and double-stranded RNA. The polypeptide is Ribonuclease pancreatic (RNASE1) (Equus caballus (Horse)).